We begin with the raw amino-acid sequence, 396 residues long: S-adenosylmethionine synthase (396 aa).

Position 16 (His-16) interacts with ATP. Asp-18 contacts Mg(2+). A K(+)-binding site is contributed by Glu-44. Glu-57 and Gln-100 together coordinate L-methionine. The segment at 100-110 (QSVDIAQGVDR) is flexible loop. Residues 165-167 (DAK), Asp-240, 246-247 (RK), Ala-263, and Lys-267 each bind ATP. Asp-240 lines the L-methionine pocket. Lys-271 is an L-methionine binding site.

Belongs to the AdoMet synthase family. As to quaternary structure, homotetramer; dimer of dimers. Mg(2+) serves as cofactor. K(+) is required as a cofactor.

The protein localises to the cytoplasm. The enzyme catalyses L-methionine + ATP + H2O = S-adenosyl-L-methionine + phosphate + diphosphate. It participates in amino-acid biosynthesis; S-adenosyl-L-methionine biosynthesis; S-adenosyl-L-methionine from L-methionine: step 1/1. Functionally, catalyzes the formation of S-adenosylmethionine (AdoMet) from methionine and ATP. The overall synthetic reaction is composed of two sequential steps, AdoMet formation and the subsequent tripolyphosphate hydrolysis which occurs prior to release of AdoMet from the enzyme. This is S-adenosylmethionine synthase from Pseudomonas putida (strain W619).